The primary structure comprises 142 residues: Hemoglobin subunit alpha-1 (142 aa).

The region spanning 2 to 142 (LLSADDKKHI…VSTVLTSKYR (141 aa)) is the Globin domain. His59 lines the O2 pocket. Residue His88 participates in heme b binding.

This sequence belongs to the globin family. Heterotetramer of two alpha chains and two beta chains. In terms of tissue distribution, red blood cells.

Involved in oxygen transport from the lung to the various peripheral tissues. In Xenopus laevis (African clawed frog), this protein is Hemoglobin subunit alpha-1 (hba1).